A 404-amino-acid chain; its full sequence is Cysteine desulfurase IscS (404 aa).

Residues 75–76 (AT), N155, Q183, and 203–205 (SGH) contribute to the pyridoxal 5'-phosphate site. K206 carries the post-translational modification N6-(pyridoxal phosphate)lysine. Pyridoxal 5'-phosphate is bound at residue T243. The active-site Cysteine persulfide intermediate is the C328. Residue C328 coordinates [2Fe-2S] cluster.

Belongs to the class-V pyridoxal-phosphate-dependent aminotransferase family. NifS/IscS subfamily. In terms of assembly, homodimer. Forms a heterotetramer with IscU, interacts with other sulfur acceptors. Pyridoxal 5'-phosphate is required as a cofactor.

It is found in the cytoplasm. It catalyses the reaction (sulfur carrier)-H + L-cysteine = (sulfur carrier)-SH + L-alanine. The protein operates within cofactor biosynthesis; iron-sulfur cluster biosynthesis. In terms of biological role, master enzyme that delivers sulfur to a number of partners involved in Fe-S cluster assembly, tRNA modification or cofactor biosynthesis. Catalyzes the removal of elemental sulfur and selenium atoms from cysteine and selenocysteine to produce alanine. Functions as a sulfur delivery protein for Fe-S cluster synthesis onto IscU, an Fe-S scaffold assembly protein, as well as other S acceptor proteins. Also functions as a selenium delivery protein in the pathway for the biosynthesis of selenophosphate. This Salmonella paratyphi C (strain RKS4594) protein is Cysteine desulfurase IscS.